A 653-amino-acid chain; its full sequence is Elongation factor 4 (653 aa).

The tract at residues 1 to 30 (MRTPCSQHRRDRPSAIGSQLPDADTLDTRQ) is disordered. In terms of domain architecture, tr-type G spans 50-231 (AQIRNFCIIA…EVVRQVPPPQ (182 aa)). GTP-binding positions include 62–67 (DHGKST) and 178–181 (NKID).

The protein belongs to the TRAFAC class translation factor GTPase superfamily. Classic translation factor GTPase family. LepA subfamily.

The protein localises to the cell membrane. The enzyme catalyses GTP + H2O = GDP + phosphate + H(+). Functionally, required for accurate and efficient protein synthesis under certain stress conditions. May act as a fidelity factor of the translation reaction, by catalyzing a one-codon backward translocation of tRNAs on improperly translocated ribosomes. Back-translocation proceeds from a post-translocation (POST) complex to a pre-translocation (PRE) complex, thus giving elongation factor G a second chance to translocate the tRNAs correctly. Binds to ribosomes in a GTP-dependent manner. This Mycobacterium bovis (strain ATCC BAA-935 / AF2122/97) protein is Elongation factor 4.